A 338-amino-acid chain; its full sequence is Ketol-acid reductoisomerase (NADP(+)) (338 aa).

The KARI N-terminal Rossmann domain occupies 1–181; that stretch reads MKVFYDKDCD…GGGKAGIIET (181 aa). NADP(+) contacts are provided by residues 24–27, R47, and S52; that span reads YGSQ. H107 is an active-site residue. Residue G133 participates in NADP(+) binding. The 146-residue stretch at 182-327 folds into the KARI C-terminal knotted domain; it reads NFKEETETDL…AQLRAMMPWI (146 aa). D190, E194, E226, and E230 together coordinate Mg(2+). Residue S251 participates in substrate binding.

It belongs to the ketol-acid reductoisomerase family. It depends on Mg(2+) as a cofactor.

The enzyme catalyses (2R)-2,3-dihydroxy-3-methylbutanoate + NADP(+) = (2S)-2-acetolactate + NADPH + H(+). It catalyses the reaction (2R,3R)-2,3-dihydroxy-3-methylpentanoate + NADP(+) = (S)-2-ethyl-2-hydroxy-3-oxobutanoate + NADPH + H(+). The protein operates within amino-acid biosynthesis; L-isoleucine biosynthesis; L-isoleucine from 2-oxobutanoate: step 2/4. Its pathway is amino-acid biosynthesis; L-valine biosynthesis; L-valine from pyruvate: step 2/4. Functionally, involved in the biosynthesis of branched-chain amino acids (BCAA). Catalyzes an alkyl-migration followed by a ketol-acid reduction of (S)-2-acetolactate (S2AL) to yield (R)-2,3-dihydroxy-isovalerate. In the isomerase reaction, S2AL is rearranged via a Mg-dependent methyl migration to produce 3-hydroxy-3-methyl-2-ketobutyrate (HMKB). In the reductase reaction, this 2-ketoacid undergoes a metal-dependent reduction by NADPH to yield (R)-2,3-dihydroxy-isovalerate. The sequence is that of Ketol-acid reductoisomerase (NADP(+)) from Acidovorax ebreus (strain TPSY) (Diaphorobacter sp. (strain TPSY)).